We begin with the raw amino-acid sequence, 475 residues long: Ribulose bisphosphate carboxylase large chain (475 aa).

A propeptide spanning residues 1–2 (MA) is cleaved from the precursor. Residue Pro-3 is modified to N-acetylproline. The residue at position 14 (Lys-14) is an N6,N6,N6-trimethyllysine. Asn-123 and Thr-173 together coordinate substrate. Lys-175 (proton acceptor) is an active-site residue. Position 177 (Lys-177) interacts with substrate. Residues Lys-201, Asp-203, and Glu-204 each coordinate Mg(2+). At Lys-201 the chain carries N6-carboxylysine. The active-site Proton acceptor is His-294. The substrate site is built by Arg-295, His-327, and Ser-379.

This sequence belongs to the RuBisCO large chain family. Type I subfamily. As to quaternary structure, heterohexadecamer of 8 large chains and 8 small chains. It depends on Mg(2+) as a cofactor.

Its subcellular location is the plastid. The protein localises to the chloroplast. It carries out the reaction 2 (2R)-3-phosphoglycerate + 2 H(+) = D-ribulose 1,5-bisphosphate + CO2 + H2O. The catalysed reaction is D-ribulose 1,5-bisphosphate + O2 = 2-phosphoglycolate + (2R)-3-phosphoglycerate + 2 H(+). In terms of biological role, ruBisCO catalyzes two reactions: the carboxylation of D-ribulose 1,5-bisphosphate, the primary event in carbon dioxide fixation, as well as the oxidative fragmentation of the pentose substrate in the photorespiration process. Both reactions occur simultaneously and in competition at the same active site. This Nephroselmis olivacea (Green alga) protein is Ribulose bisphosphate carboxylase large chain.